The primary structure comprises 603 residues: Protein SHORT-ROOT 2 (603 aa).

Disordered stretches follow at residues 11–58 and 106–140; these read HHHH…HSHS and DFSS…SSAG. The segment covering 31 to 44 has biased composition (low complexity); it reads SYPSSRGSTSSPSS. Over residues 45 to 58 the composition is skewed to basic residues; that stretch reads HHTHNHTYYHHSHS. A compositionally biased stretch (low complexity) spans 108 to 125; sequence SSSSSSRQFHSGTGAPSS. In terms of domain architecture, GRAS spans 179–602; sequence AAPSSSGRWA…QPVVWASAWK (424 aa). Positions 186-249 are leucine repeat I (LRI); that stretch reads RWAAQLLMEC…LTTSGPRTLR (64 aa). The tract at residues 268–354 is VHIID; sequence ALKFQELSPW…DTPHLSITTV (87 aa). Residues 318 to 322 carry the VHIID motif; that stretch reads LHILD. Residues 370 to 406 are leucine repeat II (LRII); sequence EIGQRLEKFARLMGVPFSFRAVHHSGDLADLDLAALD. The PFYRE stretch occupies residues 416–514; that stretch reads LAVNCVNALR…ERAVGRAIVD (99 aa). The segment at 517-602 is SAW; sequence SCPASQSAER…QPVVWASAWK (86 aa).

Belongs to the GRAS family. As to quaternary structure, does not interact with SCR1.

It is found in the nucleus. Putative transcription factor involved in asymmetric cell division. The sequence is that of Protein SHORT-ROOT 2 (SHR2) from Oryza sativa subsp. japonica (Rice).